The primary structure comprises 741 residues: Pentatricopeptide repeat-containing protein At1g05670, mitochondrial (741 aa).

Residues 1-21 (MKKPFTGLLMKRGTLSSFRNF) constitute a mitochondrion transit peptide. PPR repeat units follow at residues 174-208 (DPRV…GLVL), 209-244 (SVDS…GVCW), 245-279 (NVAS…GYTP), 280-314 (DVIS…GLKP), 315-349 (NSYI…GILP), 350-384 (DTVV…DITP), 385-419 (DVLT…GLEP), 420-454 (DSVT…GCSP), 455-489 (NVVT…GLQP), 490-524 (NIFT…GLNA), 525-559 (DTVT…GLQP), 560-594 (TIVT…GIAP), 595-629 (NATT…GVGP), 630-664 (DGKT…GFSV), and 665-699 (SVST…GLAA).

This sequence belongs to the PPR family. P subfamily.

It is found in the mitochondrion. The protein is Pentatricopeptide repeat-containing protein At1g05670, mitochondrial of Arabidopsis thaliana (Mouse-ear cress).